The chain runs to 262 residues: Pyridoxine 5'-phosphate synthase (262 aa).

Asparagine 6 serves as a coordination point for 3-amino-2-oxopropyl phosphate. 1-deoxy-D-xylulose 5-phosphate is bound at residue 8-9 (DH). Arginine 17 contributes to the 3-amino-2-oxopropyl phosphate binding site. Histidine 41 (proton acceptor) is an active-site residue. 2 residues coordinate 1-deoxy-D-xylulose 5-phosphate: arginine 43 and histidine 48. Glutamate 68 serves as the catalytic Proton acceptor. Threonine 98 provides a ligand contact to 1-deoxy-D-xylulose 5-phosphate. The active-site Proton donor is histidine 210. 3-amino-2-oxopropyl phosphate-binding positions include glycine 211 and 232–233 (GQ).

The protein belongs to the PNP synthase family. As to quaternary structure, homooctamer; tetramer of dimers.

It localises to the cytoplasm. The enzyme catalyses 3-amino-2-oxopropyl phosphate + 1-deoxy-D-xylulose 5-phosphate = pyridoxine 5'-phosphate + phosphate + 2 H2O + H(+). Its pathway is cofactor biosynthesis; pyridoxine 5'-phosphate biosynthesis; pyridoxine 5'-phosphate from D-erythrose 4-phosphate: step 5/5. Its function is as follows. Catalyzes the complicated ring closure reaction between the two acyclic compounds 1-deoxy-D-xylulose-5-phosphate (DXP) and 3-amino-2-oxopropyl phosphate (1-amino-acetone-3-phosphate or AAP) to form pyridoxine 5'-phosphate (PNP) and inorganic phosphate. This chain is Pyridoxine 5'-phosphate synthase, found in Campylobacter jejuni subsp. jejuni serotype O:23/36 (strain 81-176).